A 1101-amino-acid chain; its full sequence is Rho GTPase-activating protein 30 (1101 aa).

One can recognise a Rho-GAP domain in the interval 20 to 215 (CDLQEHLQHS…FILTHVDQLF (196 aa)). Disordered stretches follow at residues 224-243 (EVES…SPED), 300-400 (HETK…RAGG), and 451-529 (ALQH…AEDG). The segment covering 308–318 (RGAEDREDKSN) has biased composition (basic and acidic residues). Positions 360–376 (LENDSIEAAEGEQEPEA) are enriched in acidic residues. A compositionally biased stretch (pro residues) spans 459-472 (ASGPGPGPGLGPGP). The segment covering 508-520 (DSFSFLEDSSSSE) has biased composition (low complexity). Ser576 is modified (phosphoserine). Disordered regions lie at residues 621–906 (GPKP…QPSP) and 965–991 (CPRP…SWRN). Basic and acidic residues-rich tracts occupy residues 658–694 (GEDK…DRGE), 701–735 (TKVR…KGVE), 759–770 (EEAQVEAGRDLE), and 779–822 (AEEK…DSRS). The span at 976-991 (GERAWGSRASRSSWRN) shows a compositional bias: low complexity. The residue at position 996 (Ser996) is a Phosphoserine. The segment at 1050–1101 (LELPSEGAEGSGSRSRLSLPPREPQVPDPLLSSQRRSYAFETQANPGKGEGL) is disordered. The span at 1053–1069 (PSEGAEGSGSRSRLSLP) shows a compositional bias: low complexity. Polar residues predominate over residues 1080–1094 (LSSQRRSYAFETQAN).

Interacts with RHOU in a GTP-independent manner.

The protein resides in the cytoplasmic vesicle. Functionally, GTPase-activating protein (GAP) for RAC1 and RHOA, but not for CDC42. The polypeptide is Rho GTPase-activating protein 30 (ARHGAP30) (Homo sapiens (Human)).